We begin with the raw amino-acid sequence, 299 residues long: Acetylglutamate kinase (299 aa).

Residues 64 to 65, Arg-86, and Asn-197 each bind substrate; that span reads GG.

It belongs to the acetylglutamate kinase family. ArgB subfamily.

Its subcellular location is the cytoplasm. It carries out the reaction N-acetyl-L-glutamate + ATP = N-acetyl-L-glutamyl 5-phosphate + ADP. It participates in amino-acid biosynthesis; L-arginine biosynthesis; N(2)-acetyl-L-ornithine from L-glutamate: step 2/4. Functionally, catalyzes the ATP-dependent phosphorylation of N-acetyl-L-glutamate. The chain is Acetylglutamate kinase from Persephonella marina (strain DSM 14350 / EX-H1).